A 229-amino-acid polypeptide reads, in one-letter code: MELLLLSNSTLPGKAWLEHALPLIAEQLQGRRSAVFIPFAGVTQTWDDYTAKTAAVLAPLGVSVTGIHSVVDPVAAIENAEIVIVGGGNTFQLLKQCRERGLLAPITDVVKRGALYIGWSAGANLACPTIRTTNDMPIVDPQGFDALNLFPLQINPHFTNALPEGHKGETREQRIRELLVVAPELTIIGLPEGNWITVSKGHATLGGPNTTYVFKAGEEAVPLEAGHRF.

Catalysis depends on charge relay system residues serine 120, aspartate 135, and histidine 157.

It belongs to the peptidase S51 family.

It is found in the cytoplasm. The catalysed reaction is Dipeptidase E catalyzes the hydrolysis of dipeptides Asp-|-Xaa. It does not act on peptides with N-terminal Glu, Asn or Gln, nor does it cleave isoaspartyl peptides.. In terms of biological role, hydrolyzes dipeptides containing N-terminal aspartate residues. May play a role in allowing the cell to use peptide aspartate to spare carbon otherwise required for the synthesis of the aspartate family of amino acids. In Shigella boydii serotype 18 (strain CDC 3083-94 / BS512), this protein is Peptidase E.